Reading from the N-terminus, the 801-residue chain is Probable methionine--tRNA ligase (801 aa).

Residues 25–35 carry the 'HIGH' region motif; sequence PYVNNVPHLGN. The short motif at 347–351 is the 'KMSKS' region element; sequence KFSKS. Position 350 (Lys-350) interacts with ATP. Positions 606 to 633 are disordered; the sequence is DKLKGTKLSDGGQKKEQKKQSGGSKSKN. The tRNA-binding domain maps to 639–742; that stretch reads TVAKLDIRVG…ESAAVGERVT (104 aa).

This sequence belongs to the class-I aminoacyl-tRNA synthetase family.

Its subcellular location is the cytoplasm. It carries out the reaction tRNA(Met) + L-methionine + ATP = L-methionyl-tRNA(Met) + AMP + diphosphate. In Oryza sativa subsp. japonica (Rice), this protein is Probable methionine--tRNA ligase.